Here is an 879-residue protein sequence, read N- to C-terminus: Phosphoenolpyruvate carboxylase (879 aa).

Active-site residues include His138 and Lys546.

The protein belongs to the PEPCase type 1 family. Mg(2+) is required as a cofactor.

It carries out the reaction oxaloacetate + phosphate = phosphoenolpyruvate + hydrogencarbonate. Its function is as follows. Forms oxaloacetate, a four-carbon dicarboxylic acid source for the tricarboxylic acid cycle. This is Phosphoenolpyruvate carboxylase from Pectobacterium atrosepticum (strain SCRI 1043 / ATCC BAA-672) (Erwinia carotovora subsp. atroseptica).